The sequence spans 309 residues: MIYQSTLNKPLTISGIGLHTGRQITMILRPAEPDNGIIFHCTDGERRVSIPAVSANVVDTRLATVIGKDGLSVSTIEHLMAALSACGIDNLHIDIDGPEVPVMDGSAAPFVALLQETGNRVQEKRRKYLAIRKPITLVDGEKRVSIIPSRFFRITFDIAFDHPCIGLQHRAIKVNTETFRKEIAPARTFGFLHEVEYLKANGLALGGSLDNAVVIGEEGVLNPDGVRFEDECVRHKILDAVGDFSLLGHRVLGHVKAYKAGHDINHQMVEKILANADCWQLVESGEAASHGSLSMTGCAAMAMAGVAEA.

The Zn(2+) site is built by histidine 78, histidine 235, and aspartate 239. Residue histidine 262 is the Proton donor of the active site.

It belongs to the LpxC family. Requires Zn(2+) as cofactor.

The catalysed reaction is a UDP-3-O-[(3R)-3-hydroxyacyl]-N-acetyl-alpha-D-glucosamine + H2O = a UDP-3-O-[(3R)-3-hydroxyacyl]-alpha-D-glucosamine + acetate. Its pathway is glycolipid biosynthesis; lipid IV(A) biosynthesis; lipid IV(A) from (3R)-3-hydroxytetradecanoyl-[acyl-carrier-protein] and UDP-N-acetyl-alpha-D-glucosamine: step 2/6. In terms of biological role, catalyzes the hydrolysis of UDP-3-O-myristoyl-N-acetylglucosamine to form UDP-3-O-myristoylglucosamine and acetate, the committed step in lipid A biosynthesis. The sequence is that of UDP-3-O-acyl-N-acetylglucosamine deacetylase from Syntrophotalea carbinolica (strain DSM 2380 / NBRC 103641 / GraBd1) (Pelobacter carbinolicus).